The following is a 203-amino-acid chain: Dual-action ribosomal maturation protein DarP (203 aa).

Over residues 1–13 (MQPMTRNSRNSPG) the composition is skewed to polar residues. The tract at residues 1-39 (MQPMTRNSRNSPGSRFPGAFAPEPDMDEPKSKSQKKRDM) is disordered. Residues 27–39 (DEPKSKSQKKRDM) show a composition bias toward basic and acidic residues.

Belongs to the DarP family.

Its subcellular location is the cytoplasm. Member of a network of 50S ribosomal subunit biogenesis factors which assembles along the 30S-50S interface, preventing incorrect 23S rRNA structures from forming. Promotes peptidyl transferase center (PTC) maturation. The chain is Dual-action ribosomal maturation protein DarP from Cupriavidus pinatubonensis (strain JMP 134 / LMG 1197) (Cupriavidus necator (strain JMP 134)).